A 525-amino-acid polypeptide reads, in one-letter code: Zinc finger protein 678 (525 aa).

14 C2H2-type zinc fingers span residues 97-119 (FQCI…KRIH), 125-147 (YKCE…KRIH), 153-175 (YKCD…KKIH), 181-203 (YKCD…KKIH), 209-231 (YPCE…KRIH), 237-259 (YKCK…KRIH), 265-287 (YKCE…RRIH), 293-315 (YKCE…KRIH), 321-343 (YQCE…KRIH), 349-371 (YKCE…KRIH), 377-399 (YKCK…RRIH), 405-427 (YKCE…KRIH), 433-455 (YKCK…KRIH), and 461-483 (YKCE…KRIH). A C2H2-type 15; degenerate zinc finger spans residues 489-511 (YKCKECGKGFYQSSIHSKYKRIY).

This sequence belongs to the krueppel C2H2-type zinc-finger protein family.

It localises to the nucleus. Functionally, may be involved in transcriptional regulation. The polypeptide is Zinc finger protein 678 (ZNF678) (Homo sapiens (Human)).